We begin with the raw amino-acid sequence, 80 residues long: D-alanyl carrier protein 2 (80 aa).

The 80-residue stretch at 1-80 (MIMDDVKATV…KIVAKVASLQ (80 aa)) folds into the Carrier domain. At Ser-38 the chain carries O-(pantetheine 4'-phosphoryl)serine.

It belongs to the DltC family. Post-translationally, 4'-phosphopantetheine is transferred from CoA to a specific serine of apo-DCP.

The protein resides in the cytoplasm. It participates in cell wall biogenesis; lipoteichoic acid biosynthesis. Carrier protein involved in the D-alanylation of lipoteichoic acid (LTA). The loading of thioester-linked D-alanine onto DltC is catalyzed by D-alanine--D-alanyl carrier protein ligase DltA. The DltC-carried D-alanyl group is further transferred to cell membrane phosphatidylglycerol (PG) by forming an ester bond, probably catalyzed by DltD. D-alanylation of LTA plays an important role in modulating the properties of the cell wall in Gram-positive bacteria, influencing the net charge of the cell wall. The polypeptide is D-alanyl carrier protein 2 (Lactiplantibacillus plantarum (strain ATCC BAA-793 / NCIMB 8826 / WCFS1) (Lactobacillus plantarum)).